A 603-amino-acid chain; its full sequence is Probable methyltransferase PMT20 (603 aa).

The Cytoplasmic segment spans residues 1 to 16; it reads MKSGKQSSQPEKGTSR. Residues 17–37 form a helical; Signal-anchor for type II membrane protein membrane-spanning segment; the sequence is ILSLTVLFIAFCGFSFYLGGI. Topologically, residues 38–603 are lumenal; that stretch reads FCSERDKIVA…KLWFSSNQTS (566 aa). Residues N313 and N600 are each glycosylated (N-linked (GlcNAc...) asparagine).

Belongs to the methyltransferase superfamily.

Its subcellular location is the golgi apparatus membrane. In Arabidopsis thaliana (Mouse-ear cress), this protein is Probable methyltransferase PMT20.